Consider the following 601-residue polypeptide: Amino-acid acetyltransferase, mitochondrial (601 aa).

In terms of domain architecture, N-acetyltransferase spans 401–558 (FTMDNLIASK…KKKQNNKKKK (158 aa)).

Belongs to the acetyltransferase family.

It is found in the mitochondrion. It carries out the reaction L-glutamate + acetyl-CoA = N-acetyl-L-glutamate + CoA + H(+). It functions in the pathway amino-acid biosynthesis; L-arginine biosynthesis; N(2)-acetyl-L-ornithine from L-glutamate: step 1/4. N-acetylglutamate synthase involved in arginine biosynthesis. This chain is Amino-acid acetyltransferase, mitochondrial (ARG2), found in Lodderomyces elongisporus (strain ATCC 11503 / CBS 2605 / JCM 1781 / NBRC 1676 / NRRL YB-4239) (Yeast).